The following is a 621-amino-acid chain: Leucine aminopeptidase (621 aa).

Positions 1 to 73 (MPLLRSSQHI…ISNRKEFRKM (73 aa)) are excised as a propeptide. The segment at 129 to 152 (SSSGGSGGNGGSAGSSGNGEGGAQ) is disordered. Positions 132 to 150 (GGSGGNGGSAGSSGNGEGG) are enriched in gly residues. The a peptide site is built by K390, D395, and K402. Zn(2+)-binding residues include K390 and D395. The tract at residues 400 to 417 (NLKAAPGSMIDLMKFDMS) is L13 loop. The active site involves K402. The Zn(2+) site is built by D410, M412, D415, D475, and E477. A peptide contacts are provided by D415 and D475. R479 is a catalytic residue.

This sequence belongs to the peptidase M17 family. Homohexamer composed of dimer of trimers. Both the identity and concentration of metal ions available dictate the extent to which oligomerization occurs; Mn(2+) and Co(2+) induces oligomerization, whereas Mg(2+) has no effect, and Zn(2+) causes irreversible protein aggregation in vitro. Zn(2+) serves as cofactor.

The protein resides in the cytoplasm. The enzyme catalyses Release of an N-terminal amino acid, Xaa-|-Yaa-, in which Xaa is preferably Leu, but may be other amino acids including Pro although not Arg or Lys, and Yaa may be Pro. Amino acid amides and methyl esters are also readily hydrolyzed, but rates on arylamides are exceedingly low.. The catalysed reaction is L-cysteinylglycine + H2O = L-cysteine + glycine. Its activity is regulated as follows. Oligomerization is required for catalytic activity and is metal-dependent. The type of metal that binds the 2 metal binding sites influences catalytic activity and substrate specificity. In vitro, activated by Co(2+), Mn(2+), Ni(2+), Mg(2+) and Zn(2+) with decreasing strength. Occupancy of the site 2 is essential and sufficient for activating the enzyme but occupation of the 2 sites is necessary for full catalytic activity. Inhibited by Ca(2+). Inhibited by fungal metabolite bestatin. In terms of biological role, aminopeptidase which preferentially cleaves leucine residues from the N-terminus of peptides. Also, has some activity towards tryptophan and methionine and has very low activity towards alanine, arginine, asparagine, phenylalanine and tyrosine. No activity towards histidine, serine, valine, isoleucine, glycine, aspartic acid and glutamic acid. In addition, cleaves the Cys-Gly dipeptide, probably as part of the glutathione regulation pathway; cleavage only occurs in the presence of Mn(2+). Plays a role in the final step of host hemoglobin catabolism, by cleaving hemoglobin-derived oligopeptides providing a source of amino acids for the parasite protein synthesis and for the maintenance of osmotic homeostasis. This chain is Leucine aminopeptidase, found in Plasmodium vivax (strain Salvador I).